The following is a 150-amino-acid chain: Transcriptional regulator MraZ (150 aa).

2 SpoVT-AbrB domains span residues 9 to 54 and 83 to 126; these read QSIH…PPEE and AEEC…NKST.

The protein belongs to the MraZ family. In terms of assembly, forms oligomers.

It is found in the cytoplasm. The protein localises to the nucleoid. The chain is Transcriptional regulator MraZ from Syntrophobacter fumaroxidans (strain DSM 10017 / MPOB).